The primary structure comprises 421 residues: Subtilisin-like protease 2 (421 aa).

The first 16 residues, 1–16, serve as a signal peptide directing secretion; that stretch reads MQLLNFGLLLLPFVAG. Positions 17–122 are excised as a propeptide; the sequence is DLAPQPEPLL…VHPDQHVYLA (106 aa). Residues 36–122 form the Inhibitor I9 domain; the sequence is QYIVTLKEGL…VHPDQHVYLA (87 aa). Positions 131-421 constitute a Peptidase S8 domain; the sequence is RWGLGYMSSK…ERKFTLPKYY (291 aa). Active-site charge relay system residues include aspartate 169 and histidine 201. Asparagine 248, asparagine 261, and asparagine 348 each carry an N-linked (GlcNAc...) asparagine glycan. Serine 357 (charge relay system) is an active-site residue. An N-linked (GlcNAc...) asparagine glycan is attached at asparagine 388.

Belongs to the peptidase S8 family.

Its subcellular location is the secreted. Secreted subtilisin-like serine protease with keratinolytic activity that contributes to pathogenicity. The polypeptide is Subtilisin-like protease 2 (SUB2) (Trichophyton verrucosum (strain HKI 0517)).